The primary structure comprises 517 residues: Alpha,alpha-trehalose-phosphate synthase [UDP-forming] 1 (517 aa).

Tyr98 and Asp152 together coordinate D-glucose 6-phosphate. Arg288 and Lys293 together coordinate UDP. UDP-alpha-D-glucose is bound by residues Arg288 and Lys293. Arg326 contributes to the D-glucose 6-phosphate binding site. 387–395 (DGMNLVAYE) contributes to the UDP-alpha-D-glucose binding site. A UDP-binding site is contributed by 391 to 395 (LVAYE). Residues 486–517 (FHAKKASFSDNNSENGEPSNGVETPAQEQVAQ) form a disordered region. Over residues 493–517 (FSDNNSENGEPSNGVETPAQEQVAQ) the composition is skewed to polar residues.

It belongs to the glycosyltransferase 20 family.

It catalyses the reaction D-glucose 6-phosphate + UDP-alpha-D-glucose = alpha,alpha-trehalose 6-phosphate + UDP + H(+). It participates in carbohydrate biosynthesis. In terms of biological role, synthase catalytic subunit of the trehalose synthase complex that catalyzes the production of trehalose from glucose-6-phosphate and UDP-alpha-D-glucose in a two step process. In Aspergillus niger, this protein is Alpha,alpha-trehalose-phosphate synthase [UDP-forming] 1.